Consider the following 319-residue polypeptide: tRNA U34 carboxymethyltransferase (319 aa).

Residues Lys88, Trp102, Lys107, Gly126, 176 to 177, Met192, Tyr196, and Arg311 each bind carboxy-S-adenosyl-L-methionine; that span reads LE.

This sequence belongs to the class I-like SAM-binding methyltransferase superfamily. CmoB family. In terms of assembly, homotetramer.

The enzyme catalyses carboxy-S-adenosyl-L-methionine + 5-hydroxyuridine(34) in tRNA = 5-carboxymethoxyuridine(34) in tRNA + S-adenosyl-L-homocysteine + H(+). Catalyzes carboxymethyl transfer from carboxy-S-adenosyl-L-methionine (Cx-SAM) to 5-hydroxyuridine (ho5U) to form 5-carboxymethoxyuridine (cmo5U) at position 34 in tRNAs. In Pseudomonas syringae pv. tomato (strain ATCC BAA-871 / DC3000), this protein is tRNA U34 carboxymethyltransferase.